A 395-amino-acid chain; its full sequence is MANDYLFTSESVSEGHPDKVADQISDAILDAILEQDKYSRVAAETLCNTGLVVLAGEITTTANIDYIQIARDTIKRIGYDNTDYGIDYKGCAVLVAYDKQSPDIAQGVDRAHDDNLDQGAGDQGLMFGYACDETPELMPLPIYLSHRLVERQASLRRDGRLQWLRPDAKSQVTVRYVDGKPHSIDTVVLSTQHAPDIELPALREAVIEEIIKPTLPADLIKGDIKFLVNPTGRFVIGGPQGDCGLTGRKIIVDTYGGAAPHGGGAFSGKDPSKVDRSAAYAGRYVAKNIVAAGLASRALIQVSYAIGVAEPTSVMVNTFGTGRVSDAVITKLVREHFDLRPKGIIKMLDLLRPIYEKTAAYGHFGREEPEFSWEATDKALALAEAAGVEPTARVA.

An ATP-binding site is contributed by H16. D18 serves as a coordination point for Mg(2+). Residue E44 participates in K(+) binding. The L-methionine site is built by E57 and Q100. Residues 100-110 are flexible loop; that stretch reads QSPDIAQGVDR. Residues 167 to 169, 233 to 234, D242, 248 to 249, A265, and K269 each bind ATP; these read DAK, RF, and RK. An L-methionine-binding site is contributed by D242. Residue K273 participates in L-methionine binding.

It belongs to the AdoMet synthase family. Homotetramer; dimer of dimers. Requires Mg(2+) as cofactor. The cofactor is K(+).

Its subcellular location is the cytoplasm. It catalyses the reaction L-methionine + ATP + H2O = S-adenosyl-L-methionine + phosphate + diphosphate. Its pathway is amino-acid biosynthesis; S-adenosyl-L-methionine biosynthesis; S-adenosyl-L-methionine from L-methionine: step 1/1. Functionally, catalyzes the formation of S-adenosylmethionine (AdoMet) from methionine and ATP. The overall synthetic reaction is composed of two sequential steps, AdoMet formation and the subsequent tripolyphosphate hydrolysis which occurs prior to release of AdoMet from the enzyme. The protein is S-adenosylmethionine synthase of Burkholderia lata (strain ATCC 17760 / DSM 23089 / LMG 22485 / NCIMB 9086 / R18194 / 383).